A 199-amino-acid polypeptide reads, in one-letter code: Thymidylate kinase (199 aa).

7–14 (GIDGSGKS) lines the ATP pocket.

It belongs to the thymidylate kinase family.

The catalysed reaction is dTMP + ATP = dTDP + ADP. Its function is as follows. Phosphorylation of dTMP to form dTDP in both de novo and salvage pathways of dTTP synthesis. The chain is Thymidylate kinase from Neorickettsia sennetsu (strain ATCC VR-367 / Miyayama) (Ehrlichia sennetsu).